Here is a 194-residue protein sequence, read N- to C-terminus: 5'-deoxynucleotidase VC_1978 (194 aa).

Substrate is bound by residues R18 to W19 and H33. The HD domain occupies I30–Y142. H33, H68, and D69 together coordinate a divalent metal cation. Substrate contacts are provided by residues D69, D77 to T80, and D137. Residue D137 participates in a divalent metal cation binding.

The protein belongs to the 5DNU family. As to quaternary structure, homodimer. A divalent metal cation is required as a cofactor.

It is found in the cytoplasm. The catalysed reaction is a 2'-deoxyribonucleoside 5'-phosphate + H2O = a 2'-deoxyribonucleoside + phosphate. Functionally, catalyzes the strictly specific dephosphorylation of 2'-deoxyribonucleoside 5'-monophosphates. The polypeptide is 5'-deoxynucleotidase VC_1978 (Vibrio cholerae serotype O1 (strain ATCC 39315 / El Tor Inaba N16961)).